Consider the following 385-residue polypeptide: Rubredoxin-NAD(+) reductase (385 aa).

FAD is bound by residues 8-11 (AGTA), 32-33 (SR), I79, E156, D275, and I293.

This sequence belongs to the FAD-dependent oxidoreductase family. As to quaternary structure, homodimer. Requires FAD as cofactor.

It is found in the cytoplasm. The catalysed reaction is 2 reduced [rubredoxin] + NAD(+) + H(+) = 2 oxidized [rubredoxin] + NADH. It participates in hydrocarbon metabolism; alkane degradation. Its function is as follows. Involved in the hydrocarbon hydroxylating system, which transfers electrons from NADH to rubredoxin reductase and then through rubredoxin to alkane 1 monooxygenase. In Pseudomonas putida (Arthrobacter siderocapsulatus), this protein is Rubredoxin-NAD(+) reductase (alkT).